We begin with the raw amino-acid sequence, 472 residues long: FAD-linked oxidoreductase azaL (472 aa).

An N-terminal signal peptide occupies residues 1-18; the sequence is MFRTILLCSLGLTTLSSA. Residues asparagine 22, asparagine 44, asparagine 102, asparagine 123, asparagine 227, asparagine 246, asparagine 273, asparagine 305, asparagine 318, asparagine 390, and asparagine 415 are each glycosylated (N-linked (GlcNAc...) asparagine). Residues 54 to 228 enclose the FAD-binding PCMH-type domain; it reads TTYDAPTYIG…TSATYKIYNA (175 aa).

It belongs to the oxygen-dependent FAD-linked oxidoreductase family.

It participates in secondary metabolite biosynthesis. FAD-linked oxidoreductase; part of the gene cluster that mediates the biosynthesis of azaphilones, a class of fungal metabolites characterized by a highly oxygenated pyrano-quinone bicyclic core and exhibiting a broad range of bioactivities. In the first step, the non-reducing polyketide synthase azaA forms the hexaketide precursor from successive condensations of five malonyl-CoA units, presumably with a simple acetyl-CoA starter unit. The reactive polyketide chain then undergoes a PT-mediated C2-C7 cyclization to afford the aromatic ring and is eventually released as an aldehyde through the R-domain. The putative ketoreductase azaE is proposed to catalyze the reduction of the terminal ketone resulting in the early culture product FK17-P2a. The monooxygenase azaH was demonstrated to be the only enzyme required to convert FK17-P2a to azanigerone E. AzaH first hydroxylates the benzaldehyde intermediate FK17-P2a at C4, which triggers the formation of the pyran-ring to afford azanigerone E. In parallel, the 2,4-dimethylhexanoyl chain is synthesized by the HR-PKS azaB and is proposed to be transferred to the C4-hydroxyl of azanigerone E by the acyltransferase azaD directly from the ACP domain of azaB. Alternatively, the 2,4-dimethyl-hexanoyl chain may be offloaded from the HR-PKS as a carboxylic acid and converted to an acyl-CoA by azaF. The resulting acyl-CoA molecule could then be taken up as a substrate by AzaD to form azanigerone B. To yield the carboxylic acid substituent in azanigerone A, the hydroxypropyl side chain of azanigerone B would need to undergo a C-C oxidative cleavage catalyzed by cytochrome P450 AzaI. AzaI is proposed to act on a vicinal diol that leads to a C-C bond scission either through an alkoxyradical intermediate or a peroxy complex. In the biosynthesis of azanigerone A, azanigerone B first undergoes hydroxylation at C10, possibly catalyzed by one of the two FAD-dependent monooxygenases encoded in the cluster, azaG or azaL, resulting in the vicinal diol azanigerone C. Oxidative cleavage of azanigerone C by azaI would yield the corresponding aldehyde derivative of azanigerone A. Finally, the dehydrogenase azaJ is proposed to convert the aldehyde functional group into the carboxylic acid, completing the conversion from azanigerone B to azanigerone A. Alternatively, the oxidation of aldehyde to carboxylic acid may be catalyzed by the same P450 enzyme azaI via consecutive oxidation or by endogenous alcohol dehydrogenase. The protein is FAD-linked oxidoreductase azaL of Aspergillus niger (strain ATCC 1015 / CBS 113.46 / FGSC A1144 / LSHB Ac4 / NCTC 3858a / NRRL 328 / USDA 3528.7).